Consider the following 245-residue polypeptide: 2,3-bisphosphoglycerate-dependent phosphoglycerate mutase (245 aa).

Residues 8–15, 21–22, R60, 87–90, K98, 114–115, and 183–184 contribute to the substrate site; these read RHGQSLWN, TG, ERHY, RR, and GN. The Tele-phosphohistidine intermediate role is filled by H9. The Proton donor/acceptor role is filled by E87.

This sequence belongs to the phosphoglycerate mutase family. BPG-dependent PGAM subfamily.

The enzyme catalyses (2R)-2-phosphoglycerate = (2R)-3-phosphoglycerate. It participates in carbohydrate degradation; glycolysis; pyruvate from D-glyceraldehyde 3-phosphate: step 3/5. Catalyzes the interconversion of 2-phosphoglycerate and 3-phosphoglycerate. The protein is 2,3-bisphosphoglycerate-dependent phosphoglycerate mutase of Bacillus thuringiensis (strain Al Hakam).